The following is a 518-amino-acid chain: MATRINYNYEAAVTYTSLKQNERLMNKSLLRLSTGLRILSAADDASGLFIADQLALVSAGLEQGNRNIQFGISALQIAEGGVSQIYDKLKTMYQKAVSAANDINDPNARAALQRDIENLRDAILKIAQDTEYNGIRLLNGSFNNVRIHYGARSAQTLSVSISSVLPQQLGGYVAEDSPATATDTNNVLTNIGTTNTNYSVASGDSLAFTFTDGTSITFNSLNQLGYDFNNTGTYILDASAIVNTINNNPTLQGKGIRAYAENVSEADLTFDTTNVNIDQGDEVTITFYSGGELVFTKTYTDTVTLDQFIADINNQAGGKLIASKDPSGTKLVLSTPNGETISVEVTVNDADGDTVVSSINLGALLQGAAGTVVNTSGATASAVKVGTLIVMGSENFTVQGTGIAYFTAATSGTFNSLNDVDVTTNKGAEIAQVLIQRAVRQVDTIRTQIGSTINNLQAIYDAQAVAKDNTDNAESIIRNVDFAKEMTEFTKYQIRMQSGVAMLAQANALPQLVLQLLR.

It belongs to the bacterial flagellin family.

The protein resides in the secreted. The protein localises to the bacterial flagellum. In terms of biological role, flagellin is the subunit protein which polymerizes to form the filaments of bacterial flagella. The polypeptide is Flagellin (flaA) (Aquifex aeolicus (strain VF5)).